The sequence spans 403 residues: Phosphopentomutase (403 aa).

The Mn(2+) site is built by Asp-13, Asp-298, His-303, Asp-339, His-340, and His-351.

This sequence belongs to the phosphopentomutase family. Mn(2+) serves as cofactor.

The protein resides in the cytoplasm. It carries out the reaction 2-deoxy-alpha-D-ribose 1-phosphate = 2-deoxy-D-ribose 5-phosphate. It catalyses the reaction alpha-D-ribose 1-phosphate = D-ribose 5-phosphate. It functions in the pathway carbohydrate degradation; 2-deoxy-D-ribose 1-phosphate degradation; D-glyceraldehyde 3-phosphate and acetaldehyde from 2-deoxy-alpha-D-ribose 1-phosphate: step 1/2. Its function is as follows. Isomerase that catalyzes the conversion of deoxy-ribose 1-phosphate (dRib-1-P) and ribose 1-phosphate (Rib-1-P) to deoxy-ribose 5-phosphate (dRib-5-P) and ribose 5-phosphate (Rib-5-P), respectively. The polypeptide is Phosphopentomutase (Streptococcus pneumoniae (strain Hungary19A-6)).